The following is a 540-amino-acid chain: Growth factor receptor-bound protein 14 (540 aa).

Threonine 2 bears the N-acetylthreonine mark. Residue glutamine 9 is modified to Phosphothreonine. One can recognise a Ras-associating domain in the interval 106–192 (KKQVIKVYSE…NKLYFRKNYA (87 aa)). Residues 234–342 (YPEIHGFLHA…WVTAIRLLKY (109 aa)) form the PH domain. Serine 372 and serine 375 each carry phosphoserine. The 97-residue stretch at 439–535 (WFHHKISRDE…VLPCKLKHYC (97 aa)) folds into the SH2 domain.

Belongs to the GRB7/10/14 family. Interacts with the cytoplasmic domain of the autophosphorylated insulin receptor (INSR), through the SH2 domain. Interacts with GRB14 (via BPS domain); this interaction protects the tyrosines in the activation loop on INSR from dephosphorylation. Binds to the ankyrin repeat region of TNKS2 via its N-terminus. Interacts with activated NRAS. Interacts (via SH2 domain) with TEK/TIE2 (tyrosine phosphorylated). Phosphorylated on serine residues. Phosphorylated on tyrosine residues by TEK/TIE2. Expressed at high levels in the liver, kidney, pancreas, testis, ovary, heart and skeletal muscle.

The protein localises to the cytoplasm. It localises to the endosome membrane. Its function is as follows. Adapter protein which modulates coupling of cell surface receptor kinases with specific signaling pathways. Binds to, and suppresses signals from, the activated insulin receptor (INSR). Potent inhibitor of insulin-stimulated MAPK3 phosphorylation. Plays a critical role regulating PDPK1 membrane translocation in response to insulin stimulation and serves as an adapter protein to recruit PDPK1 to activated insulin receptor, thus promoting PKB/AKT1 phosphorylation and transduction of the insulin signal. The sequence is that of Growth factor receptor-bound protein 14 (GRB14) from Homo sapiens (Human).